The following is a 122-amino-acid chain: Large ribosomal subunit protein uL24 (122 aa).

The segment at 43-64 (IRKHHRRDMPTPQGGTTKGGII) is disordered.

It belongs to the universal ribosomal protein uL24 family. Part of the 50S ribosomal subunit.

Functionally, one of two assembly initiator proteins, it binds directly to the 5'-end of the 23S rRNA, where it nucleates assembly of the 50S subunit. One of the proteins that surrounds the polypeptide exit tunnel on the outside of the subunit. The protein is Large ribosomal subunit protein uL24 of Cutibacterium acnes (strain DSM 16379 / KPA171202) (Propionibacterium acnes).